The primary structure comprises 427 residues: Protein king tubby 1 (427 aa).

Positions 48–174 (SPSNPDQIIS…ASGHNDAEGD (127 aa)) are disordered. The span at 57–86 (SSSGSPTTVTATGTGTTTTTGSVTTTPTSP) shows a compositional bias: low complexity.

This sequence belongs to the TUB family.

It localises to the cytoplasm. It is found in the nucleus. This chain is Protein king tubby 1 (king-tubby1), found in Culex quinquefasciatus (Southern house mosquito).